A 209-amino-acid polypeptide reads, in one-letter code: Probable glutathione peroxidase 8 (209 aa).

The residue at position 1 (M1) is an N-acetylmethionine. The chain crosses the membrane as a helical span at residues 18–40; the sequence is VFAVLLSIVLCTVTLFLLQLKFL. Residue C79 is part of the active site.

It belongs to the glutathione peroxidase family.

The protein localises to the membrane. The enzyme catalyses 2 glutathione + H2O2 = glutathione disulfide + 2 H2O. The protein is Probable glutathione peroxidase 8 (GPX8) of Homo sapiens (Human).